Reading from the N-terminus, the 77-residue chain is DNA-directed RNA polymerase subunit omega (77 aa).

It belongs to the RNA polymerase subunit omega family. In cyanobacteria the RNAP catalytic core is composed of 2 alpha, 1 beta, 1 beta', 1 gamma and 1 omega subunit. When a sigma factor is associated with the core the holoenzyme is formed, which can initiate transcription.

The enzyme catalyses RNA(n) + a ribonucleoside 5'-triphosphate = RNA(n+1) + diphosphate. Functionally, promotes RNA polymerase assembly. Latches the N- and C-terminal regions of the beta' subunit thereby facilitating its interaction with the beta and alpha subunits. The sequence is that of DNA-directed RNA polymerase subunit omega from Thermosynechococcus vestitus (strain NIES-2133 / IAM M-273 / BP-1).